A 147-amino-acid polypeptide reads, in one-letter code: Receptor activity-modifying protein 3 (147 aa).

The N-terminal stretch at 1–22 is a signal peptide; sequence MKTPAQRLHLLPLLLLLCGECA. Residues 23–112 are Extracellular-facing; sequence QVCGCNETGM…CTVDRTHWED (90 aa). N28, N57, N70, and N102 each carry an N-linked (GlcNAc...) asparagine glycan. Intrachain disulfides connect C39/C71 and C56/C103. The helical transmembrane segment at 113-137 threads the bilayer; that stretch reads PPDEVLIPLIAVPVVLTVAMAGLVV. At 138–147 the chain is on the cytoplasmic side; that stretch reads WRSKHTDRLL.

The protein belongs to the RAMP family. As to quaternary structure, heterodimer of CALCRL and RAMP3; interaction induces allosteric modulation of CALCRL function and ligand specificity for adrenomedullin/ADM and intermedin/ADM2. Heterodimer of CALCR and RAMP3; interaction form the receptor complex AMYR3 for amylin/IAPP. Interacts with GPER1. Expressed predominantly in the testis, embryonic and adult brain and in kidney.

The protein resides in the cell membrane. It localises to the membrane. Accessory protein that interacts with and modulates the function of G-protein coupled receptors including calcitonin gene-related peptide type 1 receptor (CALCRL), calcitonin receptor (CALCR) and G-protein coupled estrogen receptor 1 (GPER1). Required for the transport of CALCRL and GPER1 receptors to the plasma membrane. Plays a role in cardioprotection by reducing cardiac hypertrophy and perivascular fibrosis in a GPER1-dependent manner. Together with CALCRL, form a receptor complex for adrenomedullin/ADM and intermedin/ADM2. Together with CALCR, act as a receptor complex for amylin/IAPP. The chain is Receptor activity-modifying protein 3 from Mus musculus (Mouse).